A 316-amino-acid chain; its full sequence is Lipoyl synthase (316 aa).

The [4Fe-4S] cluster site is built by Cys-66, Cys-71, Cys-77, Cys-92, Cys-96, Cys-99, and Ser-306. Positions 78-295 (YSQQTATFMV…ADIAKSMGFK (218 aa)) constitute a Radical SAM core domain.

This sequence belongs to the radical SAM superfamily. Lipoyl synthase family. It depends on [4Fe-4S] cluster as a cofactor.

Its subcellular location is the cytoplasm. The catalysed reaction is [[Fe-S] cluster scaffold protein carrying a second [4Fe-4S](2+) cluster] + N(6)-octanoyl-L-lysyl-[protein] + 2 oxidized [2Fe-2S]-[ferredoxin] + 2 S-adenosyl-L-methionine + 4 H(+) = [[Fe-S] cluster scaffold protein] + N(6)-[(R)-dihydrolipoyl]-L-lysyl-[protein] + 4 Fe(3+) + 2 hydrogen sulfide + 2 5'-deoxyadenosine + 2 L-methionine + 2 reduced [2Fe-2S]-[ferredoxin]. The protein operates within protein modification; protein lipoylation via endogenous pathway; protein N(6)-(lipoyl)lysine from octanoyl-[acyl-carrier-protein]: step 2/2. In terms of biological role, catalyzes the radical-mediated insertion of two sulfur atoms into the C-6 and C-8 positions of the octanoyl moiety bound to the lipoyl domains of lipoate-dependent enzymes, thereby converting the octanoylated domains into lipoylated derivatives. The chain is Lipoyl synthase from Rhodopirellula baltica (strain DSM 10527 / NCIMB 13988 / SH1).